Reading from the N-terminus, the 750-residue chain is Meiosis protein mei2 (750 aa).

The disordered stretch occupies residues M1–T20. A compositionally biased stretch (polar residues) spans S7–T20. RRM domains are found at residues R195 to R270 and L293 to V361.

As to quaternary structure, binds rad24 when phosphorylated. In terms of processing, inactivated by phosphorylation by ran1/pat1.

Crucial for commitment to meiosis but it is not sufficient itself for the commitment. May be a splicing regulator. In Schizosaccharomyces pombe (strain 972 / ATCC 24843) (Fission yeast), this protein is Meiosis protein mei2 (mei2).